Consider the following 356-residue polypeptide: HORMA domain-containing protein 1 (356 aa).

Positions 24–225 (QQSLVLVKKL…TPFHSIKMNV (202 aa)) constitute an HORMA domain. Disordered stretches follow at residues 282–305 (ETQE…PKMD) and 333–356 (QLEF…SVPK). The span at 288-298 (EQPHRHTKEDF) shows a compositional bias: basic and acidic residues. Residues 347–356 (PKRRKVSVPK) show a composition bias toward basic residues.

It is found in the nucleus. The protein localises to the chromosome. Plays a key role in meiotic progression by ensuring that sufficient numbers of processed DNA double-strand breaks (DSBs) are available for successful homology search, promoting synaptonemal-complex formation independently and playing key role in the male mid-pachytene checkpoint and the female meiotic prophase checkpoint. The polypeptide is HORMA domain-containing protein 1 (hormad1) (Danio rerio (Zebrafish)).